We begin with the raw amino-acid sequence, 137 residues long: Large ribosomal subunit protein uL16c (137 aa).

The protein belongs to the universal ribosomal protein uL16 family. In terms of assembly, part of the 50S ribosomal subunit.

Its subcellular location is the plastid. The protein localises to the chloroplast. This chain is Large ribosomal subunit protein uL16c, found in Adiantum capillus-veneris (Maidenhair fern).